The primary structure comprises 683 residues: Solute carrier organic anion transporter family member 2B1 (683 aa).

The disordered stretch occupies residues 1–30; sequence MPDRSTKTTMGTEDMHERKVSVEPQDSHQD. Residues 1–41 lie on the Cytoplasmic side of the membrane; it reads MPDRSTKTTMGTEDMHERKVSVEPQDSHQDAQPRGMFHNIK. Positions 13-30 are enriched in basic and acidic residues; sequence EDMHERKVSVEPQDSHQD. Ser21 is subject to Phosphoserine. The chain crosses the membrane as a helical span at residues 42–61; it reads FFVLCHSLLQLTQLMISGYL. The Extracellular portion of the chain corresponds to 62 to 80; that stretch reads KSSISTVEKRFGLSSQISG. Residues 81-101 traverse the membrane as a helical segment; the sequence is LLAAFNEVGNVSLILFVSYFG. The Cytoplasmic segment spans residues 102–107; sequence SRVHRP. Residues 108-132 traverse the membrane as a helical segment; sequence RMIGYGALLVATAGLLMALPHFISE. The Extracellular portion of the chain corresponds to 133-177; the sequence is PYRYDHSSSDNRSLDFEASLCLPTTMAPASALSNGSCSSHTETKH. N-linked (GlcNAc...) asparagine glycans are attached at residues Asn143 and Asn166. The helical transmembrane segment at 178–207 threads the bilayer; the sequence is LTMVGIMFAAQTLLGIGGVPIQPFGISYID. At 208–226 the chain is on the cytoplasmic side; the sequence is DFAHHSNSPLYIGILFGIT. A helical transmembrane segment spans residues 227-247; the sequence is TMGPGLAYGLGSLMLRLYVDI. Topologically, residues 248–265 are extracellular; sequence DRMPEGGINLTPKDPRWV. A helical transmembrane segment spans residues 266-290; it reads GAWWLGFLISSGLVVLASSPYFFFP. The Cytoplasmic portion of the chain corresponds to 291–355; it reads REMPKEKHEF…VKVFPRVLLR (65 aa). A phosphoserine mark is found at Ser312 and Ser315. The helical transmembrane segment at 356–377 threads the bilayer; sequence NLRHPIFLLVVLSQVCTSSMVA. Topologically, residues 378-397 are extracellular; the sequence is GMATFLPKFLERQFSITASF. The chain crosses the membrane as a helical span at residues 398–421; it reads ANMLLGCLTIPLVIVGIMMGGVLV. Topologically, residues 422-425 are cytoplasmic; that stretch reads KRLH. Residues 426–449 traverse the membrane as a helical segment; sequence LSPVQCSALCLLGSLLCLLFSVPL. The Extracellular portion of the chain corresponds to 450 to 553; the sequence is FFIGCSTHQI…SACSRLVLPF (104 aa). The Kazal-like domain maps to 472-532; the sequence is PSLFPGCSEP…VFYTNCSCVA (61 aa). 3 disulfides stabilise this stretch: Cys478-Cys509, Cys484-Cys505, and Cys493-Cys530. 2 N-linked (GlcNAc...) asparagine glycosylation sites follow: Asn527 and Asn534. Residues 554–576 traverse the membrane as a helical segment; the sequence is IVLFSLGAGLASITHTPSFMLIL. The Cytoplasmic portion of the chain corresponds to 577-585; the sequence is RGVKKEDKT. A helical membrane pass occupies residues 586–611; that stretch reads LAVGMQFMLLRVLAWMPSPVIHGSAI. At 612 to 644 the chain is on the extracellular side; sequence DTTCVHWALTCGRRAVCRYYDHDLLRNRFIGLQ. A helical membrane pass occupies residues 645-662; that stretch reads FFFKSGSLVCFTLVLAIL. Residues 663–683 lie on the Cytoplasmic side of the membrane; that stretch reads RQQSREASTRTTVKSSELQQL.

This sequence belongs to the organo anion transporter (TC 2.A.60) family. Expressed in liver, kidney, small intestine mucosa, large intestine, brain, lung, spleen, stomach and heart.

It is found in the cell membrane. Its subcellular location is the basal cell membrane. The protein localises to the apical cell membrane. It catalyses the reaction dehydroepiandrosterone 3-sulfate(out) = dehydroepiandrosterone 3-sulfate(in). It carries out the reaction estrone 3-sulfate(out) = estrone 3-sulfate(in). The enzyme catalyses estrone 3-sulfate(out) + hydrogencarbonate(in) = estrone 3-sulfate(in) + hydrogencarbonate(out). The catalysed reaction is taurocholate(out) = taurocholate(in). It catalyses the reaction coproporphyrin III(out) = coproporphyrin III(in). It carries out the reaction substance P(out) = substance P(in). The enzyme catalyses pregnenolone sulfate(out) = pregnenolone sulfate(in). The catalysed reaction is prostaglandin E2(out) = prostaglandin E2(in). It catalyses the reaction prostaglandin D2(out) = prostaglandin D2(in). It carries out the reaction L-thyroxine(out) = L-thyroxine(in). Functionally, mediates the Na(+)-independent transport of steroid sulfate conjugates such as estrone 3-sulfate (E1S), dehydroepiandrosterone sulfate (DHEA-S) and pregnenolone sulfate (PregS) and other specific organic anions. Responsible for the transport of E1S through the basal membrane of syncytiotrophoblast, highlighting a potential role in the placental absorption of fetal-derived sulfated steroids including DHEA-S. Also facilitates the uptake of sulfated steroids at the basal/sinusoidal membrane of hepatocytes, therefore accounting for the major part of organic anions clearance of liver. Mediates the intestinal uptake of sulfated steroids. Mediates the uptake of the neurosteroids DHEA-S and PregS into the endothelial cells of the blood-brain barrier as the first step to enter the brain. Also plays a role in the reuptake of neuropeptides such as substance P/TAC1 and vasoactive intestinal peptide/VIP released from retinal neurons. May act as a heme transporter that promotes cellular iron availability. Also transports heme by-product coproporphyrin III (CPIII), and may be involved in their hepatic disposition. Mediates the uptake of other substrates such as prostaglandins D2 (PGD2), E1 (PGE1) and E2 (PGE2), taurocholate, L-thyroxine, leukotriene C4 and thromboxane B2. May contribute to regulate the transport of organic compounds in testis across the blood-testis-barrier. Shows a pH-sensitive substrate specificity which may be ascribed to the protonation state of the binding site and leads to a stimulation of substrate transport in an acidic microenvironment. The exact transport mechanism has not been yet deciphered but most likely involves an anion exchange, coupling the cellular uptake of organic substrate with the efflux of an anionic compound. Hydrogencarbonate/HCO3(-) acts as a probable counteranion that exchanges for organic anions. Cytoplasmic glutamate may also act as counteranion in the placenta. An inwardly directed proton gradient has also been proposed as the driving force of E1S uptake with a (H(+):E1S) stoichiometry of (1:1). In Mus musculus (Mouse), this protein is Solute carrier organic anion transporter family member 2B1.